The primary structure comprises 566 residues: Putative ankyrin repeat protein RF_0987 (566 aa).

Disordered stretches follow at residues 61–118 (KKKN…HENS), 276–314 (PPVM…SAEI), and 355–392 (VNNN…SEST). The segment covering 78–92 (NQEEPKLASQEHTEA) has biased composition (basic and acidic residues). The segment covering 101 to 112 (TGNTALPSVTAS) has biased composition (polar residues). Positions 296–308 (TPVTTPSKVVPTT) are enriched in low complexity. Residues 365–378 (EKSPPVSSSNVTIQ) are compositionally biased toward polar residues. 2 ANK repeats span residues 506–535 (SGET…KIST) and 539–566 (ECQY…KGYQ).

The polypeptide is Putative ankyrin repeat protein RF_0987 (Rickettsia felis (strain ATCC VR-1525 / URRWXCal2) (Rickettsia azadi)).